Consider the following 321-residue polypeptide: Nod factor export ATP-binding protein I (321 aa).

The ABC transporter domain maps to 17–247 (LSVEGLRKRY…EIGCDVVEVY (231 aa)). 49-56 (GPNGAGKT) is an ATP binding site.

It belongs to the ABC transporter superfamily. Lipooligosaccharide exporter (TC 3.A.1.102) family. In terms of assembly, the complex is composed of two ATP-binding proteins (NodI) and two transmembrane proteins (NodJ).

It is found in the cell inner membrane. Its function is as follows. Part of the ABC transporter complex NodIJ involved in the export of the nodulation factors (Nod factors), the bacterial signal molecules that induce symbiosis and subsequent nodulation induction. Nod factors are LCO (lipo-chitin oligosaccharide), a modified beta-1,4-linked N-acetylglucosamine oligosaccharide. This subunit is responsible for energy coupling to the transport system. This Ralstonia nicotianae (strain ATCC BAA-1114 / GMI1000) (Ralstonia solanacearum) protein is Nod factor export ATP-binding protein I.